Here is a 342-residue protein sequence, read N- to C-terminus: Dihydroorotate dehydrogenase (quinone) (342 aa).

FMN-binding positions include 60 to 64 (AGFDK) and Thr-84. Residue Lys-64 participates in substrate binding. Position 109 to 113 (109 to 113 (NRMGF)) interacts with substrate. Positions 137 and 170 each coordinate FMN. Asn-170 is a binding site for substrate. The active-site Nucleophile is the Ser-173. A substrate-binding site is contributed by Asn-175. The FMN site is built by Lys-215 and Thr-243. 244–245 (NT) provides a ligand contact to substrate. Residues Gly-266, Gly-295, and 316–317 (YT) each bind FMN.

It belongs to the dihydroorotate dehydrogenase family. Type 2 subfamily. Monomer. Requires FMN as cofactor.

The protein resides in the cell membrane. It carries out the reaction (S)-dihydroorotate + a quinone = orotate + a quinol. It functions in the pathway pyrimidine metabolism; UMP biosynthesis via de novo pathway; orotate from (S)-dihydroorotate (quinone route): step 1/1. In terms of biological role, catalyzes the conversion of dihydroorotate to orotate with quinone as electron acceptor. This is Dihydroorotate dehydrogenase (quinone) from Halorhodospira halophila (strain DSM 244 / SL1) (Ectothiorhodospira halophila (strain DSM 244 / SL1)).